We begin with the raw amino-acid sequence, 414 residues long: tRNA (guanine-N(7)-)-methyltransferase non-catalytic subunit WDR4 (414 aa).

Ala2 bears the N-acetylalanine mark. WD repeat units follow at residues Gln60–Val99, Thr101–Arg140, Gly144–Phe184, and Gly187–Cys227. The segment at Glu377–Ser414 is disordered.

The protein belongs to the WD repeat TRM82 family. As to quaternary structure, non-catalytic component of the METTL1-WDR4 complex, composed of METTL1 and WDR4. Interacts with FEN1; the interaction is direct.

Its subcellular location is the nucleus. It localises to the chromosome. It participates in tRNA modification; N(7)-methylguanine-tRNA biosynthesis. In terms of biological role, non-catalytic component of the METTL1-WDR4 methyltransferase complex required for the formation of N(7)-methylguanine in a subset of RNA species, such as tRNAs, mRNAs and microRNAs (miRNAs). In the METTL1-WDR4 methyltransferase complex, WDR4 acts as a scaffold for tRNA-binding. Required for the formation of N(7)-methylguanine at position 46 (m7G46) in a large subset of tRNAs that contain the 5'-RAGGU-3' motif within the variable loop. M7G46 interacts with C13-G22 in the D-loop to stabilize tRNA tertiary structure and protect tRNAs from decay. Also required for the formation of N(7)-methylguanine at internal sites in a subset of mRNAs. Also required for methylation of a specific subset of miRNAs, such as let-7. Independently of METTL1, also plays a role in genome stability: localizes at the DNA replication site and regulates endonucleolytic activities of FEN1. The polypeptide is tRNA (guanine-N(7)-)-methyltransferase non-catalytic subunit WDR4 (Bos taurus (Bovine)).